The sequence spans 998 residues: UPF0182 protein AAur_2732 (998 aa).

A run of 7 helical transmembrane segments spans residues 18–38, 64–84, 115–135, 168–188, 211–231, 260–280, and 287–307; these read GALT…IFFA, IITF…AIRI, VVMI…AASQ, FLGF…IAGI, QIHI…NFWL, AILA…AIIG, and IGTA…PWVI. Disordered regions lie at residues 490 to 518, 888 to 923, and 971 to 998; these read GAPD…TFSG, LFGG…PTDA, and QARL…SPSS. A compositionally biased stretch (basic and acidic residues) spans 496–509; it reads PNREQDRPAGREGG. A compositionally biased stretch (pro residues) spans 908–919; sequence TSPPGTTPPPAG. Low complexity predominate over residues 976–990; the sequence is ATPAPTATPGATPSA.

This sequence belongs to the UPF0182 family.

The protein resides in the cell membrane. This is UPF0182 protein AAur_2732 from Paenarthrobacter aurescens (strain TC1).